A 33-amino-acid polypeptide reads, in one-letter code: FLKPSVAGFLLQKIGVIESLLEKFAVGTESIAK.

Position 13 (Lys-13) interacts with AMP. Lys-13 lines the ATP pocket.

This sequence belongs to the phosphoglycerate kinase family. As to quaternary structure, monomer. Mg(2+) is required as a cofactor.

It carries out the reaction (2R)-3-phosphoglycerate + ATP = (2R)-3-phospho-glyceroyl phosphate + ADP. The chain is Phosphoglycerate kinase from Pseudotsuga menziesii (Douglas-fir).